A 304-amino-acid chain; its full sequence is Glycine--tRNA ligase alpha subunit (304 aa).

Belongs to the class-II aminoacyl-tRNA synthetase family. Tetramer of two alpha and two beta subunits.

The protein resides in the cytoplasm. The enzyme catalyses tRNA(Gly) + glycine + ATP = glycyl-tRNA(Gly) + AMP + diphosphate. This is Glycine--tRNA ligase alpha subunit from Actinobacillus pleuropneumoniae serotype 3 (strain JL03).